We begin with the raw amino-acid sequence, 137 residues long: Small ribosomal subunit protein bS16 (137 aa).

It belongs to the bacterial ribosomal protein bS16 family.

This is Small ribosomal subunit protein bS16 from Leuconostoc citreum (strain KM20).